A 264-amino-acid chain; its full sequence is MLRCGGRGLLLGLAVAAAAVMAARLMGWWGPRAGFRLFIPEELSRYRGGPGDPGLYLALLGRVYDVSSGRRHYEPGSHYSGFAGRDASRAFVTGDCSEAGLVDDVSDLSAAEMLTLHNWLSFYEKNYVCVGRVTGRFYGEDGLPTPALTQVEAAITRGLEANKLQLQEKQTFPPCNAEWSSARGSRLWCSQKSGGVSRDWIGVPRKLYKPGAKEPRCVCVRTTGPPSGQMPDNPPHRNRGDLDHPNLAEYTGCPPLAITCSFPL.

An N-terminal signal peptide occupies residues 1-22 (MLRCGGRGLLLGLAVAAAAVMA). Residues 35–134 (FRLFIPEELS…KNYVCVGRVT (100 aa)) form the Cytochrome b5 heme-binding domain.

This sequence belongs to the cytochrome b5 family. MAPR subfamily.

It is found in the secreted. In terms of biological role, heme-binding protein which promotes neuronal but not astrocyte differentiation. In Homo sapiens (Human), this protein is Neuferricin.